Here is a 388-residue protein sequence, read N- to C-terminus: STE20-related kinase adapter protein strd-1 (388 aa).

One can recognise a Protein kinase domain in the interval 52–335; it reads YDCVRYMGTC…ASDLKSSAWL (284 aa). ATP-binding positions include 58-66 and Lys82; that span reads MGTCNGGQI.

This sequence belongs to the protein kinase superfamily. STE Ser/Thr protein kinase family. STE20 subfamily. As to quaternary structure, interacts with sad-1. Interacts with par-4. In terms of tissue distribution, expressed in nervous system, pharynx and excretory canal. Expressed in germline.

The protein resides in the perikaryon. It is found in the nucleus. Its subcellular location is the cell projection. It localises to the dendrite. The protein localises to the axon. The protein resides in the synapse. It is found in the cytoplasm. Its subcellular location is the cell cortex. Functionally, pseudokinase which may act as an adapter for kinases sad-1 and par-4 and thereby is involved in several developmental processes. Regulates cell-autonomously both neuronal polarity and synaptic organization when bound to sad-1. Required for sad-1 localization to synapses. Required to establish germline stem cell (GSC) quiescence during dauer development, to promote cell shedding during embryogenesis and to control asymmetric cell division of the Q.p neuroblast lineage, probably when bound to par-4. May be involved in maintaining the integrity of the early embryonic cortex when bound to par-4. The chain is STE20-related kinase adapter protein strd-1 from Caenorhabditis elegans.